The chain runs to 235 residues: Coiled-coil domain-containing protein 71L (235 aa).

Residues 1-13 (MRRSMKRRRRRRP) are compositionally biased toward basic residues. The tract at residues 1–30 (MRRSMKRRRRRRPVAPATAARGGDFRAEDG) is disordered. 2 positions are modified to phosphoserine: serine 52 and serine 89. The interval 109–167 (PDPPGPPTARGQARRPVPRAAARRRRRGARAAAARRRKPRPPPPPPPPPEESCPAKPVA) is disordered. Basic residues predominate over residues 120-148 (QARRPVPRAAARRRRRGARAAAARRRKPR). A compositionally biased stretch (pro residues) spans 149-159 (PPPPPPPPPEE). The residue at position 185 (threonine 185) is a Phosphothreonine. Phosphoserine is present on serine 198.

This is Coiled-coil domain-containing protein 71L (CCDC71L) from Homo sapiens (Human).